A 711-amino-acid polypeptide reads, in one-letter code: MLKLPPRFFSVYSTLIHILASFLCSSDVRGDFPATRFDLGTLTLSSLKLLGDAHLNNGTIKLTRELSVPTSTAGKALYGKPVKFRHPETKSPASFTTYFSFSVTNLNPSSIGGGLAFVISPDEDYLGSTGGFLGLTEETGSGSGFVAVEFDTLMDVQFKDVNGNHVGLDLNAVVSAAVADLGNVDIDLKSGNAVNSWITYDGSGRVLTVYVSYSNLKPKSPILSVPLDLDRYVSDSMFVGFSGSTQGSTEIHSVDWWSFSSSFEESSESPPPMPNSPPPSSPSSSITPSLSTVRRKTADPSSSCRNKLCKKSPAAVAGVVTAGAFFLALFAGVIIWVYSKKIKYTRKSESLASEIMKSPREFTYKELKLATDCFSSSRVIGNGAFGTVYKGILQDSGEIIAIKRCSHISQGNTEFLSELSLIGTLRHRNLLRLQGYCREKGEILLIYDLMPNGSLDKALYESPTTLPWPHRRKILLGVASALAYLHQECENQIIHRDVKTSNIMLDANFNPKLGDFGLARQTEHDKSPDATAAAGTMGYLAPEYLLTGRATEKTDVFSYGAVVLEVCTGRRPITRPEPEPGLRPGLRSSLVDWVWGLYREGKLLTAVDERLSEFNPEEMSRVMMVGLACSQPDPVTRPTMRSVVQILVGEADVPEVPIAKPSSSMSFSTSELLLTLQDSVSDCNEVLAPISTTSCSSSEHDIFIVGKDRSV.

The first 30 residues, 1–30 (MLKLPPRFFSVYSTLIHILASFLCSSDVRG), serve as a signal peptide directing secretion. Residues 31–315 (DFPATRFDLG…NKLCKKSPAA (285 aa)) lie on the Extracellular side of the membrane. The legume-lectin like stretch occupies residues 35–260 (TRFDLGTLTL…IHSVDWWSFS (226 aa)). The N-linked (GlcNAc...) asparagine glycan is linked to N57. The interval 265 to 306 (ESSESPPPMPNSPPPSSPSSSITPSLSTVRRKTADPSSSCRN) is disordered. The segment covering 269–281 (SPPPMPNSPPPSS) has biased composition (pro residues). Over residues 282-291 (PSSSITPSLS) the composition is skewed to low complexity. Residues 316 to 336 (VAGVVTAGAFFLALFAGVIIW) traverse the membrane as a helical segment. At 337–711 (VYSKKIKYTR…IFIVGKDRSV (375 aa)) the chain is on the cytoplasmic side. A Protein kinase domain is found at 374-656 (FSSSRVIGNG…LVGEADVPEV (283 aa)). ATP-binding positions include 380 to 388 (IGNGAFGTV) and K403. D497 acts as the Proton acceptor in catalysis.

This sequence in the C-terminal section; belongs to the protein kinase superfamily. Ser/Thr protein kinase family. It in the N-terminal section; belongs to the leguminous lectin family.

It localises to the cell membrane. The catalysed reaction is L-seryl-[protein] + ATP = O-phospho-L-seryl-[protein] + ADP + H(+). It catalyses the reaction L-threonyl-[protein] + ATP = O-phospho-L-threonyl-[protein] + ADP + H(+). In terms of biological role, involved in resistance response to the pathogenic oomycetes Phytophthora infestans and Phytophthora capsici. The sequence is that of L-type lectin-domain containing receptor kinase VIII.2 from Arabidopsis thaliana (Mouse-ear cress).